Consider the following 103-residue polypeptide: Large ribosomal subunit protein bL21 (103 aa).

Belongs to the bacterial ribosomal protein bL21 family. In terms of assembly, part of the 50S ribosomal subunit. Contacts protein L20.

This protein binds to 23S rRNA in the presence of protein L20. The protein is Large ribosomal subunit protein bL21 of Mycobacterium marinum (strain ATCC BAA-535 / M).